Consider the following 155-residue polypeptide: uncharacterized protein (155 aa).

Residues 1–23 form the signal peptide; sequence MKIRSLSRFVLASTMFASFTASA.

The protein to E.coli YkfB.

This is an uncharacterized protein from Escherichia coli (strain K12).